A 236-amino-acid chain; its full sequence is Phosphoribosylaminoimidazole-succinocarboxamide synthase (236 aa).

This sequence belongs to the SAICAR synthetase family.

The catalysed reaction is 5-amino-1-(5-phospho-D-ribosyl)imidazole-4-carboxylate + L-aspartate + ATP = (2S)-2-[5-amino-1-(5-phospho-beta-D-ribosyl)imidazole-4-carboxamido]succinate + ADP + phosphate + 2 H(+). It functions in the pathway purine metabolism; IMP biosynthesis via de novo pathway; 5-amino-1-(5-phospho-D-ribosyl)imidazole-4-carboxamide from 5-amino-1-(5-phospho-D-ribosyl)imidazole-4-carboxylate: step 1/2. The protein is Phosphoribosylaminoimidazole-succinocarboxamide synthase of Pseudomonas entomophila (strain L48).